Consider the following 411-residue polypeptide: Adenylosuccinate synthetase (411 aa).

Residues 11–17 (GDEGKGK) and 39–41 (GHT) each bind GTP. The Proton acceptor role is filled by Asp-12. 2 residues coordinate Mg(2+): Asp-12 and Gly-39. IMP-binding positions include 12–15 (DEGK), 37–40 (NAGH), Thr-121, Arg-135, Gln-215, Thr-230, and Arg-294. Catalysis depends on His-40, which acts as the Proton donor. Residue 290–296 (TTTKRPR) coordinates substrate. Residues Arg-296, 322-324 (KLD), and 400-402 (STS) contribute to the GTP site.

The protein belongs to the adenylosuccinate synthetase family. Homodimer. Requires Mg(2+) as cofactor.

The protein localises to the cytoplasm. The enzyme catalyses IMP + L-aspartate + GTP = N(6)-(1,2-dicarboxyethyl)-AMP + GDP + phosphate + 2 H(+). It participates in purine metabolism; AMP biosynthesis via de novo pathway; AMP from IMP: step 1/2. Functionally, plays an important role in the de novo pathway of purine nucleotide biosynthesis. Catalyzes the first committed step in the biosynthesis of AMP from IMP. This Helicobacter pylori (strain HPAG1) protein is Adenylosuccinate synthetase.